A 188-amino-acid chain; its full sequence is Auxin-induced protein 22C (188 aa).

Positions Leu-13–Leu-17 match the EAR-like (transcriptional repression) motif. Residues Gly-16–Lys-57 are disordered. In terms of domain architecture, PB1 spans Lys-79–Asp-167.

The protein belongs to the Aux/IAA family. As to quaternary structure, homodimers and heterodimers.

The protein localises to the nucleus. In terms of biological role, aux/IAA proteins are short-lived transcriptional factors that function as repressors of early auxin response genes at low auxin concentrations. Repression is thought to result from the interaction with auxin response factors (ARFs), proteins that bind to the auxin-responsive promoter element (AuxRE). Formation of heterodimers with ARF proteins may alter their ability to modulate early auxin response genes expression. The polypeptide is Auxin-induced protein 22C (AUX22C) (Vigna radiata var. radiata (Mung bean)).